The sequence spans 83 residues: uncharacterized protein (83 aa).

2 helical membrane-spanning segments follow: residues 23-43 (GGCY…SAIA) and 49-69 (SLWW…VVYG).

It localises to the cell membrane. This is an uncharacterized protein from Mycobacterium tuberculosis (strain CDC 1551 / Oshkosh).